The sequence spans 403 residues: Phosphoglycerate kinase (403 aa).

Residues 21 to 23 (DFN), Arg-36, 59 to 62 (HLGR), Arg-119, and Arg-154 contribute to the substrate site. Residues Lys-207, Gly-299, Glu-330, and 357–360 (GGDA) contribute to the ATP site.

This sequence belongs to the phosphoglycerate kinase family. Monomer.

The protein localises to the cytoplasm. It carries out the reaction (2R)-3-phosphoglycerate + ATP = (2R)-3-phospho-glyceroyl phosphate + ADP. Its pathway is carbohydrate degradation; glycolysis; pyruvate from D-glyceraldehyde 3-phosphate: step 2/5. The sequence is that of Phosphoglycerate kinase from Chlamydia caviae (strain ATCC VR-813 / DSM 19441 / 03DC25 / GPIC) (Chlamydophila caviae).